We begin with the raw amino-acid sequence, 1939 residues long: Myosin-8 (1939 aa).

The Myosin N-terminal SH3-like domain occupies 35 to 84 (DAKTSVFVAEPKASYVKSTIQSKEGGKVTVKTEGGATLTVREDQVFPMNP). 2 positions are modified to phosphothreonine: Thr66 and Thr71. The Myosin motor domain occupies 88-783 (DKIEDMAMMT…LLGLLEEMRD (696 aa)). Lys132 carries the N6,N6,N6-trimethyllysine modification. An ATP-binding site is contributed by 181–188 (GESGAGKT). At Tyr391 the chain carries Phosphotyrosine. Thr421 is subject to Phosphothreonine. The residue at position 426 (Tyr426) is a Phosphotyrosine. At Ser627 the chain carries Phosphoserine. Residues 660 to 682 (LNKLMTNLRSTHPHFVRCIIPNE) are actin-binding. His758 carries the post-translational modification Pros-methylhistidine. Residues 762 to 776 (KFGHTKVFFKAGLLG) are actin-binding. Residues 783 to 815 (DEKLSQIITRTQAVCRGFLMRVEYQKMLQRREA) enclose the IQ domain. A coiled-coil region spans residues 844–1939 (LLKSAETEKE…REVHTKISAE (1096 aa)). Residues Ser1093, Ser1097, Ser1163, and Ser1238 each carry the phosphoserine modification. Phosphothreonine is present on Thr1242. Ser1244 is modified (phosphoserine). The residue at position 1256 (Thr1256) is a Phosphothreonine. Ser1262 is subject to Phosphoserine. Residues Thr1266 and Thr1287 each carry the phosphothreonine modification. Phosphoserine occurs at positions 1293, 1304, and 1307. Tyr1465 is subject to Phosphotyrosine. Thr1468 carries the post-translational modification Phosphothreonine. Ser1475 carries the post-translational modification Phosphoserine. Tyr1493 bears the Phosphotyrosine mark. A Phosphoserine modification is found at Ser1496. Thr1502 bears the Phosphothreonine mark. Ser1515 bears the Phosphoserine mark. Residue Thr1518 is modified to Phosphothreonine. 6 positions are modified to phosphoserine: Ser1555, Ser1575, Ser1601, Ser1604, Ser1715, and Ser1727. Thr1731 is modified (phosphothreonine). At Ser1740 the chain carries Phosphoserine.

Belongs to the TRAFAC class myosin-kinesin ATPase superfamily. Myosin family. As to quaternary structure, muscle myosin is a hexameric protein that consists of 2 heavy chain subunits (MHC), 2 alkali light chain subunits (MLC) and 2 regulatory light chain subunits (MLC-2).

Its subcellular location is the cytoplasm. The protein localises to the myofibril. Functionally, muscle contraction. This Canis lupus familiaris (Dog) protein is Myosin-8 (MYH8).